The sequence spans 161 residues: Regulator of ribonuclease activity A (161 aa).

This sequence belongs to the RraA family. Homotrimer. Binds to both RNA-binding sites in the C-terminal region of Rne and to RhlB.

It is found in the cytoplasm. Functionally, globally modulates RNA abundance by binding to RNase E (Rne) and regulating its endonucleolytic activity. Can modulate Rne action in a substrate-dependent manner by altering the composition of the degradosome. Modulates RNA-binding and helicase activities of the degradosome. The sequence is that of Regulator of ribonuclease activity A from Shewanella oneidensis (strain ATCC 700550 / JCM 31522 / CIP 106686 / LMG 19005 / NCIMB 14063 / MR-1).